The primary structure comprises 1648 residues: Homeostatic regulator of DAG (1648 aa).

Positions 5 to 101 constitute a DMAP1-binding domain; sequence IPPTLPLDLQ…YRVTTINSTS (97 aa). N-linked (GlcNAc...) asparagine glycans are attached at residues Asn28, Asn71, and Asn98. Disordered stretches follow at residues 52–73 and 96–130; these read PYTPLRSPNSRKSKHLHRRNTS and TINSTSANNTPRRRSKRYTASLQSSLPGSSDENGS. Residues 60-71 are compositionally biased toward basic residues; sequence NSRKSKHLHRRN. Composition is skewed to polar residues over residues 96-105 and 113-128; these read TINSTSANNT and YTASLQSSLPGSSDEN. Phosphoserine is present on Ser99. 3 N-linked (GlcNAc...) asparagine glycosylation sites follow: Asn128, Asn151, and Asn209. The segment at 158–893 is fatty acyl-AMP ligase-like domain 1; sequence AMTDSLPLIL…VEKKFLNNDL (736 aa). A helical membrane pass occupies residues 228 to 248; that stretch reads VIEFTIALLGCFISGMAAVPV. 5 N-linked (GlcNAc...) asparagine glycosylation sites follow: Asn288, Asn328, Asn575, Asn644, and Asn730. Phosphoserine is present on Ser751. N-linked (GlcNAc...) asparagine glycans are attached at residues Asn881, Asn917, Asn995, and Asn1009. The tract at residues 950–1648 is fatty acyl-AMP ligase-like domain 2; it reads VKPKLALQCS…LLSDYEKDNI (699 aa). The helical transmembrane segment at 1061–1081 threads the bilayer; that stretch reads YVAMIMACLYCNLLVIPLPSV. The N-linked (GlcNAc...) asparagine glycan is linked to Asn1198. The chain crosses the membrane as a helical span at residues 1224–1244; it reads GLGFMFSCLLGIYTGASTCLF. N-linked (GlcNAc...) asparagine glycans are attached at residues Asn1301, Asn1302, Asn1447, Asn1472, Asn1488, Asn1565, Asn1597, and Asn1634.

It is found in the vacuole membrane. The protein resides in the mitochondrion membrane. Functionally, homeostatic regulator of a chemically distinct subset of diacylglycerols (DAGs) with C36 chain length that prevents the toxic accumulation of these specific DAGs in the logarithmic growth phase, which otherwise leads to endoplasmic reticulum stress. Maintains the basal level of DAG subspecies by directly facilitating DAG to triacylglycerol (TAG) conversion process, possibly via adenylation activity of its FLD domains. Does not affect the abundant DAG species (representing over 90% of total DAG pool), comprised of C32 and C34 chain lengths. Required for vacuole fusion-mediated osmoadaptation. The sequence is that of Homeostatic regulator of DAG from Saccharomyces cerevisiae (strain ATCC 204508 / S288c) (Baker's yeast).